The primary structure comprises 560 residues: MAHLQRTFPTEMSKGRASFPKGFLFGTASSSYQYEGAVNEGARGQSVWDHFSNRFPHRISDSSDGNVAVDFYHRYKEDIKRMKDINMDSFRLSIAWPRVLPYGKRDRGVSEEGIKFYNDVIDELLANEITPLVTIFHWDIPQDLEDEYGGFLSEQIIDDFRDYASLCFERFGDRVSLWCTMNEPWVYSVAGYDTGRKAPGRCSKYVNGASVAGMSGYEAYIVSHNMLLAHAEAVEVFRKCDHIKNGQIGIAHNPLWYEPYDPSDPDDVEGCNRAMDFMLGWHQHPTACGDYPETMKKSVGDRLPSFTPEQSKKLIGSCDYVGINYYSSLFVKSIKHVDPTQPTWRTDQGVDWMKTNIDGKQIAKQGGSEWSFTYPTGLRNILKYVKKTYGNPPILITENGYGEVAEQSQSLYMYNPSIDTERLEYIEGHIHAIHQAIHEDGVRVEGYYVWSLLDNFEWNSGYGVRYGLYYIDYKDGLRRYPKMSALWLKEFLRFDQEDDSSTSKKEEKKESYGKQLLHSVQDSQFVHSIKDSGALPAVLGSLFVVSATVGTSLFFKGANN.

A beta-D-glucoside is bound by residues Q33, H137, 182–183, Y326, E398, W450, 457–458, and Y466; these read NE and EW. Catalysis depends on E183, which acts as the Proton donor. E398 acts as the Nucleophile in catalysis.

The protein belongs to the glycosyl hydrolase 1 family.

It localises to the peroxisome. The enzyme catalyses Hydrolysis of terminal, non-reducing beta-D-glucosyl residues with release of beta-D-glucose.. Its function is as follows. Possesses beta-glucosidase activity toward 4-methyl-umbelliferyl-beta-D-glucoside in vitro. Possesses myrosinase activity toward indol-3-yl-methylglucosinolate (I3M) and 4-methoxy-indol-3-yl-methylglucosinolate (4MO-I3M) in vivo. Component of an inducible preinvasion resistance mechanism that prevents penetration of the nonhost fungal species B.graminis and E.pisi. Involved in indole glucosinolate (IGS) activation during pattern-triggered immunity (PTI). Functions as a myrosinase for the breakdown of flg22-triggered IGS. Required for both callose deposition and glucosinolate activation during pathogen-triggered resistance. During fungal attack, required for IGS activation that mediates broad-spectrum antifungal defense. This is Beta-glucosidase 26, peroxisomal from Arabidopsis thaliana (Mouse-ear cress).